The chain runs to 679 residues: DNA ligase (679 aa).

NAD(+) contacts are provided by residues 36 to 40 and 94 to 95; these read DEYYD and SL. Lys-126 acts as the N6-AMP-lysine intermediate in catalysis. The NAD(+) site is built by Arg-147, Glu-181, Lys-299, and Lys-323. Zn(2+) contacts are provided by Cys-415, Cys-418, Cys-433, and Cys-438. A BRCT domain is found at 603–679; it reads IQSTKLENKT…DEEFLKKMLE (77 aa).

It belongs to the NAD-dependent DNA ligase family. LigA subfamily. Mg(2+) is required as a cofactor. The cofactor is Mn(2+).

It catalyses the reaction NAD(+) + (deoxyribonucleotide)n-3'-hydroxyl + 5'-phospho-(deoxyribonucleotide)m = (deoxyribonucleotide)n+m + AMP + beta-nicotinamide D-nucleotide.. In terms of biological role, DNA ligase that catalyzes the formation of phosphodiester linkages between 5'-phosphoryl and 3'-hydroxyl groups in double-stranded DNA using NAD as a coenzyme and as the energy source for the reaction. It is essential for DNA replication and repair of damaged DNA. This chain is DNA ligase, found in Mycoplasmopsis pulmonis (strain UAB CTIP) (Mycoplasma pulmonis).